The chain runs to 1568 residues: Kielin/chordin-like protein (1568 aa).

Residues 1–23 (MAGVGAAALSLLLHLGALALAAG) form the signal peptide. The interval 27–49 (GAVPREPPGQQTTAHSSVLAGNS) is disordered. Positions 35–49 (GQQTTAHSSVLAGNS) are enriched in polar residues. The stretch at 60 to 87 (LGRLEAAVMELREQNKDLQTRVRQLESC) forms a coiled coil. 16 VWFC domains span residues 136–193 (RGCS…PICR), 194–253 (PGCD…PTCQ), 253–312 (QGCT…PVCD), 312–370 (DGCF…PVCD), 426–485 (PACE…PSCD), 485–544 (DSCT…PRCP), 544–602 (PDCI…NDCS), 602–661 (SGCA…PQCP), 667–725 (AGCP…PSCD), 725–782 (DGCL…PDCD), 782–841 (DGCE…PTCQ), 900–959 (HSCL…PRCR), 959–1017 (RGCL…PQCS), 1017–1085 (SDCE…PTCA), 1082–1145 (PTCA…PVCR), and 1149–1209 (QSCV…PRCL). N-linked (GlcNAc...) asparagine glycosylation is present at Asn-340. An N-linked (GlcNAc...) asparagine glycan is attached at Asn-499. Asn-1090 is a glycosylation site (N-linked (GlcNAc...) asparagine). A VWFD domain is found at 1213–1389 (ASCMAFGDPH…EGLWPGRPCS (177 aa)). Intrachain disulfides connect Cys-1215–Cys-1347 and Cys-1237–Cys-1388. A TIL domain is found at 1483–1543 (CPLERGFVFD…EAHCIPPEAC (61 aa)).

Interacts with BMP7 and, by doing so, enhances binding to the type I receptors that contains cytoplasmic serine/threonine protein kinase domains. Also able to interact with activin-A and TGFB1.

It is found in the secreted. Enhances bone morphogenetic protein (BMP) signaling in a paracrine manner. In contrast, it inhibits both the activin-A and TGFB1-mediated signaling pathways. The sequence is that of Kielin/chordin-like protein from Homo sapiens (Human).